The chain runs to 230 residues: 2-amino-5-formylamino-6-ribosylaminopyrimidin-4(3H)-one 5'-monophosphate deformylase (230 aa).

Fe cation is bound by residues glutamate 29, histidine 31, aspartate 40, and histidine 109.

It belongs to the creatininase superfamily. FAPy deformylase family. Homodimer. Requires Fe(2+) as cofactor. Zn(2+) is required as a cofactor.

The enzyme catalyses 2-amino-5-formylamino-6-(5-phospho-D-ribosylamino)pyrimidin-4(3H)-one + H2O = 2,5-diamino-6-(1-D-ribosylamino)pyrimidin-4(3H)-one 5'-phosphate + formate + H(+). It participates in cofactor biosynthesis; coenzyme F420 biosynthesis. The protein operates within cofactor biosynthesis; riboflavin biosynthesis. In terms of biological role, catalyzes the hydrolysis of the formamide of 2-amino-5-formylamino-6-ribosylamino-4(3H)-pyrimidinone 5'-monophosphate (FAPy) to form 2,5-diamino-6-ribosylamino-4(3H)-pyrimidinone 5'-phosphate (APy). This is 2-amino-5-formylamino-6-ribosylaminopyrimidin-4(3H)-one 5'-monophosphate deformylase from Methanobrevibacter smithii (strain ATCC 35061 / DSM 861 / OCM 144 / PS).